Reading from the N-terminus, the 372-residue chain is Queuine tRNA-ribosyltransferase (372 aa).

Aspartate 92 (proton acceptor) is an active-site residue. Substrate-binding positions include aspartate 92–tyrosine 96, aspartate 146, glutamine 188, and glycine 215. An RNA binding region spans residues glycine 246 to glutamate 252. Aspartate 265 (nucleophile) is an active-site residue. The RNA binding; important for wobble base 34 recognition stretch occupies residues threonine 270 to arginine 274. Positions 303, 305, 308, and 334 each coordinate Zn(2+).

It belongs to the queuine tRNA-ribosyltransferase family. Homodimer. Within each dimer, one monomer is responsible for RNA recognition and catalysis, while the other monomer binds to the replacement base PreQ1. It depends on Zn(2+) as a cofactor.

It carries out the reaction 7-aminomethyl-7-carbaguanine + guanosine(34) in tRNA = 7-aminomethyl-7-carbaguanosine(34) in tRNA + guanine. It functions in the pathway tRNA modification; tRNA-queuosine biosynthesis. Functionally, catalyzes the base-exchange of a guanine (G) residue with the queuine precursor 7-aminomethyl-7-deazaguanine (PreQ1) at position 34 (anticodon wobble position) in tRNAs with GU(N) anticodons (tRNA-Asp, -Asn, -His and -Tyr). Catalysis occurs through a double-displacement mechanism. The nucleophile active site attacks the C1' of nucleotide 34 to detach the guanine base from the RNA, forming a covalent enzyme-RNA intermediate. The proton acceptor active site deprotonates the incoming PreQ1, allowing a nucleophilic attack on the C1' of the ribose to form the product. After dissociation, two additional enzymatic reactions on the tRNA convert PreQ1 to queuine (Q), resulting in the hypermodified nucleoside queuosine (7-(((4,5-cis-dihydroxy-2-cyclopenten-1-yl)amino)methyl)-7-deazaguanosine). The polypeptide is Queuine tRNA-ribosyltransferase (Prochlorococcus marinus (strain MIT 9301)).